Reading from the N-terminus, the 191-residue chain is Protein GrpE (191 aa).

Residues 1 to 14 (MEDQKQTPSNQTAT) are compositionally biased toward polar residues. Residues 1–35 (MEDQKQTPSNQTATPAGDEATSTAAASPETGAPDT) form a disordered region. The span at 19–35 (EATSTAAASPETGAPDT) shows a compositional bias: low complexity.

It belongs to the GrpE family. In terms of assembly, homodimer.

It is found in the cytoplasm. Its function is as follows. Participates actively in the response to hyperosmotic and heat shock by preventing the aggregation of stress-denatured proteins, in association with DnaK and GrpE. It is the nucleotide exchange factor for DnaK and may function as a thermosensor. Unfolded proteins bind initially to DnaJ; upon interaction with the DnaJ-bound protein, DnaK hydrolyzes its bound ATP, resulting in the formation of a stable complex. GrpE releases ADP from DnaK; ATP binding to DnaK triggers the release of the substrate protein, thus completing the reaction cycle. Several rounds of ATP-dependent interactions between DnaJ, DnaK and GrpE are required for fully efficient folding. The chain is Protein GrpE from Cupriavidus taiwanensis (strain DSM 17343 / BCRC 17206 / CCUG 44338 / CIP 107171 / LMG 19424 / R1) (Ralstonia taiwanensis (strain LMG 19424)).